Reading from the N-terminus, the 128-residue chain is uncharacterized protein (128 aa).

This is an uncharacterized protein from Enterobacteria phage T4 (Bacteriophage T4).